The following is a 68-amino-acid chain: Amphipathic peptide CT1 (68 aa).

Residues 1 to 23 (MKTQIVILIVAVLFLQLVSQSDA) form the signal peptide. A Leucine amide modification is found at Leu-36. A propeptide spanning residues 40–68 (GLKNLDQYNDLFDGEISDADIKFLKDLMR) is cleaved from the precursor.

This sequence belongs to the non-disulfide-bridged peptide (NDBP) superfamily. Short antimicrobial peptide (group 4) family. In terms of tissue distribution, expressed by the venom gland.

The protein localises to the secreted. Its subcellular location is the target cell membrane. Its function is as follows. Amphipathic peptide that shows no antibacterial activity even at 50 uM but shows a low hemolytic activity against human erythrocytes. The polypeptide is Amphipathic peptide CT1 (Mesomexovis subcristatus (Scorpion)).